The primary structure comprises 79 residues: Acyl carrier protein 2 (79 aa).

Positions 2-77 (DDIETRVRKL…QAIDYLEEAV (76 aa)) constitute a Carrier domain. Serine 37 carries the post-translational modification O-(pantetheine 4'-phosphoryl)serine.

The protein belongs to the acyl carrier protein (ACP) family. 4'-phosphopantetheine is transferred from CoA to a specific serine of apo-ACP by AcpS. This modification is essential for activity because fatty acids are bound in thioester linkage to the sulfhydryl of the prosthetic group.

The protein localises to the cytoplasm. Its pathway is lipid metabolism; fatty acid biosynthesis. Functionally, carrier of the growing fatty acid chain in fatty acid biosynthesis. The polypeptide is Acyl carrier protein 2 (Pseudomonas aeruginosa (strain ATCC 15692 / DSM 22644 / CIP 104116 / JCM 14847 / LMG 12228 / 1C / PRS 101 / PAO1)).